The sequence spans 248 residues: 2-C-methyl-D-erythritol 4-phosphate cytidylyltransferase (248 aa).

Belongs to the IspD/TarI cytidylyltransferase family. IspD subfamily.

The catalysed reaction is 2-C-methyl-D-erythritol 4-phosphate + CTP + H(+) = 4-CDP-2-C-methyl-D-erythritol + diphosphate. Its pathway is isoprenoid biosynthesis; isopentenyl diphosphate biosynthesis via DXP pathway; isopentenyl diphosphate from 1-deoxy-D-xylulose 5-phosphate: step 2/6. Functionally, catalyzes the formation of 4-diphosphocytidyl-2-C-methyl-D-erythritol from CTP and 2-C-methyl-D-erythritol 4-phosphate (MEP). The chain is 2-C-methyl-D-erythritol 4-phosphate cytidylyltransferase from Corynebacterium efficiens (strain DSM 44549 / YS-314 / AJ 12310 / JCM 11189 / NBRC 100395).